The sequence spans 220 residues: Superoxide dismutase [Cu-Zn], chloroplastic (220 aa).

The transit peptide at 1 to 66 (MAAHCILFSS…AAPKPLTVFA (66 aa)) directs the protein to the chloroplast. Cu cation-binding residues include His112, His114, and His129. The cysteines at positions 123 and 212 are disulfide-linked. Residues His129, His137, His146, and Asp149 each contribute to the Zn(2+) site. Cu cation is bound at residue His186.

It belongs to the Cu-Zn superoxide dismutase family. Homotetramer. Cu cation serves as cofactor. It depends on Zn(2+) as a cofactor.

The protein resides in the plastid. Its subcellular location is the chloroplast. The enzyme catalyses 2 superoxide + 2 H(+) = H2O2 + O2. Functionally, destroys radicals which are normally produced within the cells and which are toxic to biological systems. This is Superoxide dismutase [Cu-Zn], chloroplastic (SODCP) from Solidago canadensis var. scabra (Tall goldenrod).